Reading from the N-terminus, the 1088-residue chain is RNA-directed RNA polymerase (1088 aa).

A RdRp catalytic domain is found at 501 to 687 (LSYGDVTRFL…AKRYIAGGKI (187 aa)).

This sequence belongs to the reoviridae RNA-directed RNA polymerase family. Interacts with VP3 (Potential). Interacts with VP2; this interaction activates VP1. Interacts with NSP5; this interaction is probably necessary for the formation of functional virus factories. Interacts with NSP2; this interaction is weak. Mg(2+) serves as cofactor.

The protein resides in the virion. It carries out the reaction RNA(n) + a ribonucleoside 5'-triphosphate = RNA(n+1) + diphosphate. In terms of biological role, RNA-directed RNA polymerase that is involved in both transcription and genome replication. Together with VP3 capping enzyme, forms an enzyme complex positioned near the channels situated at each of the five-fold vertices of the core. Following infection, the outermost layer of the virus is lost, leaving a double-layered particle (DLP) made up of the core and VP6 shell. VP1 then catalyzes the transcription of fully conservative plus-strand genomic RNAs that are extruded through the DLP's channels into the cytoplasm where they function as mRNAs for translation of viral proteins. One copy of each of the viral (+)RNAs is also recruited during core assembly, together with newly synthesized polymerase complexes and VP2. The polymerase of these novo-formed particles catalyzes the synthesis of complementary minus-strands leading to dsRNA formation. To do so, the polymerase specifically recognizes and binds 4 bases 5'-UGUG-3' in the conserved 3'-sequence of plus-strand RNA templates. VP2 presumably activates the autoinhibited VP1-RNA complex to coordinate packaging and genome replication. Once dsRNA synthesis is complete, the polymerase switches to the transcriptional mode, thus providing secondary transcription. In Bos taurus (Bovine), this protein is RNA-directed RNA polymerase.